An 89-amino-acid polypeptide reads, in one-letter code: MSPVNESLIDFPCDFPIKVMGKSHPDFQTTIVEVIRQFDGGFDAERVEVRPSSGGNYTGLTVTVRALNREHLDDIYRALTGHPMVKVVL.

This sequence belongs to the UPF0250 family.

This Paraburkholderia phymatum (strain DSM 17167 / CIP 108236 / LMG 21445 / STM815) (Burkholderia phymatum) protein is UPF0250 protein Bphy_0213.